Reading from the N-terminus, the 23-residue chain is Basic phospholipase A2 homolog (23 aa).

Post-translationally, contains 7 disulfide bonds. As to expression, expressed by the venom gland.

The protein localises to the secreted. This chain is Basic phospholipase A2 homolog, found in Trimeresurus stejnegeri (Chinese green tree viper).